Here is a 1003-residue protein sequence, read N- to C-terminus: MAGSSGYGLLKLLQKLSDEEFQRFKELLREEPEKFKLKPISWTKIENSSKESLVTLLNTHYPGQAWNMMLSLFLQVNREDLSIMAQKKKRHKQTKYKKFMKTTFERIWTLETNTHIPDRNYHLIVEVQYKALQEIFDSESEPVTAIVAGTTGEGKTTFLRKAMLDWASGVLLQNRFQYVFFFSVFSLNNTTELSLAELISSTLPESSETVDDILSDPKRILFILDGFDYLKFDLELRTNLCNDWRKRLPTQIVLSSLLQKIMLPGCSLLLELGQISVPKIRHLLKYPRVITMQGFSERSVEFYCMSFFDNQRGIEVAENLRNNEVLHLCSNPYLCWMFCSCLKWQFDREEEGYFKAKTDAAFFTNFMVSAFKSTYAHSPSKQNRARLKTLCTLAVEGMWKELFVFDSEDLRRNGISESDKAVWLKMQFLQTHGNHTVFYHPTLQSYFAAMFYFLKQDKDICVPVIGSIPQLLGNMYARGQTQWLQLGTFLFGLINEQVAALLQPCFGFIQPIYVRQEIICYFKCLGQQECNEKLERSQTLFSCLRDSQEERFVRQVVDLLEEITVDISSSDVLSVTAYALQKSSKLKKLHLHIQKTVFSEIYCPDHCKTRTSIGKRRNTAEYWKTLCGIFCNLYVLDLDSCQFNKRAIQDLCNSMSPTPTVPLTAFKLQSLSCSFMADFGDGSLFHTLLQLPHLKYLNLYGTYLSMDVTEKLCAALRCSACRVEELLLGKCGISSKACGIIAISLINSKVKHLSLVENPLKNKGVMSLCEMLKDPSCVLQSLMLSYCCLTFIACGHLYEALLSNKHLSLLDLGSNFLEDTGVNLLCEALKDPNCTLKELWLPGCFLTSQCCEEISAVLICNRNLKTLKLGNNNIQDTGVRQLCEALSHPNCNLECLGLDLCEFTSDCCKDLALALTTCKTLNSLNLDWKTLDHSGLVVLCEALNHKRCNLKMLGLDKSAFSEESQTLLQDVEKKNNNLNILHHPWFEAERNKRGTRLVWNSRN.

The 91-residue stretch at 1-91 folds into the Pyrin domain; it reads MAGSSGYGLL…SIMAQKKKRH (91 aa). An NACHT domain is found at 143-465; sequence VTAIVAGTTG…QDKDICVPVI (323 aa). 149-156 contacts ATP; sequence GTTGEGKT. 7 LRR repeats span residues 749–770, 778–799, 806–826, 835–856, 863–883, 892–913, and 920–940; these read KVKH…SLCE, VLQS…HLYE, HLSL…NLLC, TLKE…EISA, NLKT…RQLC, NLEC…DLAL, and TLNS…VVLC.

Sensor component of NLRP9 inflammasomes. Inflammasomes are supramolecular complexes that assemble in the cytosol in response to pathogens, such as rotavirus, but not encephalomyocarditis virus (EMCV), and play critical roles in innate immunity and inflammation. The core of NLRP9 inflammasomes consists of a signal sensor component (NLRP9), an adapter (ASC/PYCARD), which recruits an effector pro-inflammatory caspase (CASP1). Within the complex, NLRP9 and PYCARD interact via their respective DAPIN/pyrin domains. This interaction initiates speck formation (nucleation) which greatly enhances further addition of soluble PYCARD molecules to the speck in a prion-like polymerization process. Clustered PYCARD nucleates the formation of CASP1 filaments through the interaction of their respective CARD domains, acting as a platform for CASP1 polymerization. CASP1 filament formation increases local enzyme concentration, resulting in trans-autocleavage and activation. Active CASP1 then processes IL1B and IL18 precursors, leading to the release of mature cytokines in the extracellular milieu and inflammatory response. Interacts with DHX9 upon rotavirus infection; this interaction may trigger inflammasome activation and inflammatory response. Predominantly expressed in the intestine, including proximal and distal colon, cecum, ileum, jejunum and duodenum (at protein level). In the ileum, expressed in epithelial cells. Also expressed in oocytes at all follicular stages and in preimplantation embryos (at protein level). Although expression decreases in preimplantation embryos, it is still detectable in blastocyts.

Its subcellular location is the cytoplasm. It is found in the inflammasome. Functionally, as the sensor component of the NLRP9 inflammasome, plays a crucial role in innate immunity and inflammation. In response to pathogens, including rotavirus, initiates the formation of the inflammasome polymeric complex, made of NLRP9, PYCARD and CASP1. Recruitment of proCASP1 to the inflammasome promotes its activation and CASP1-catalyzed IL1B and IL18 maturation and release in the extracellular milieu. The active cytokines stimulate inflammatory responses. Inflammasomes can also induce pyroptosis, an inflammatory form of programmed cell death. NLRP9 inflammasome activation may be initiated by DHX9 interaction with viral double-stranded RNA (dsRNA), preferentially to short dsRNA segments. This is NACHT, LRR and PYD domains-containing protein 9B (Nlrp9b) from Mus musculus (Mouse).